We begin with the raw amino-acid sequence, 502 residues long: MKVRTRIAPSPTGFPHVGTAYIALFNMCFAKQHGGEFILRIEDTDQLRSTPESEKMILDSLRWLGLNWSEGPDVGGPHAPYRQSERMGIYKQYALELVEKGHAFYCFATAEELDQMRAEQQARGETPKYDGRGLKLSQEEVARRLEAGEPHVIRMKVPEEGVCKFNDLLRGEVEIPWAQVDMQVLLKTDGLPTYHLANVVDDHLMEITHVLRGEEWLPSAPKHQLLYQYFGWEMPTLCHMPLLRNPDKSKLSKRKNPTSINYYRDIGVLPEALLNYLGRMGWSMPDEREVFTLQDMMDNFDIQRVSLGGPIFDVEKLNWLNGQWIKGLTPGQLLDRLLTWKSDRSTLEDIAAAIQPRINLLSEAVNWAGFYFNHMPQITAEMFESKKLTQEQVRQSLQFAIWRLESQFTWNNDTVSQTLMDLANQMGIKLRDFMPTFFIAIAGSTSSTPVMQSMVTLGPDLTFARLRHALEIVGAPSKKEVKNWEKLNESLKLPKNEATSEA.

The 'HIGH' region motif lies at 9–19; the sequence is PSPTGFPHVGT. Residues 250-254 carry the 'KMSKS' region motif; it reads KLSKR. Residue lysine 253 coordinates ATP.

This sequence belongs to the class-I aminoacyl-tRNA synthetase family. Glutamate--tRNA ligase type 1 subfamily. As to quaternary structure, monomer.

The protein localises to the cytoplasm. It catalyses the reaction tRNA(Glu) + L-glutamate + ATP = L-glutamyl-tRNA(Glu) + AMP + diphosphate. Functionally, catalyzes the attachment of glutamate to tRNA(Glu) in a two-step reaction: glutamate is first activated by ATP to form Glu-AMP and then transferred to the acceptor end of tRNA(Glu). This Acinetobacter baumannii (strain AYE) protein is Glutamate--tRNA ligase.